Here is a 62-residue protein sequence, read N- to C-terminus: MQEEKNKEILLKDIENQIPYSKPFGVYDQLKKRIFRFILGVILLGVIIESITLLVVYFKDKK.

A helical membrane pass occupies residues 37-57 (FILGVILLGVIIESITLLVVY).

The protein localises to the membrane. This is an uncharacterized protein from Dictyostelium discoideum (Social amoeba).